The following is a 1391-amino-acid chain: DNA-directed RNA polymerase subunit beta' (1391 aa).

Zn(2+) is bound by residues Cys72, Cys74, Cys87, and Cys90. Asp462, Asp464, and Asp466 together coordinate Mg(2+). 4 residues coordinate Zn(2+): Cys816, Cys890, Cys897, and Cys900.

This sequence belongs to the RNA polymerase beta' chain family. In terms of assembly, the RNAP catalytic core consists of 2 alpha, 1 beta, 1 beta' and 1 omega subunit. When a sigma factor is associated with the core the holoenzyme is formed, which can initiate transcription. Requires Mg(2+) as cofactor. It depends on Zn(2+) as a cofactor.

The enzyme catalyses RNA(n) + a ribonucleoside 5'-triphosphate = RNA(n+1) + diphosphate. Its function is as follows. DNA-dependent RNA polymerase catalyzes the transcription of DNA into RNA using the four ribonucleoside triphosphates as substrates. In Neisseria gonorrhoeae (strain NCCP11945), this protein is DNA-directed RNA polymerase subunit beta'.